Consider the following 177-residue polypeptide: Cyclic pyranopterin monophosphate synthase 3 (177 aa).

Residues Leu79–His81 and Met116–Glu117 contribute to the substrate site. Asp131 is a catalytic residue. A disordered region spans residues Lys150–Cys177.

The protein belongs to the MoaC family. In terms of assembly, homohexamer; trimer of dimers.

It carries out the reaction (8S)-3',8-cyclo-7,8-dihydroguanosine 5'-triphosphate = cyclic pyranopterin phosphate + diphosphate. The protein operates within cofactor biosynthesis; molybdopterin biosynthesis. Its function is as follows. Catalyzes the conversion of (8S)-3',8-cyclo-7,8-dihydroguanosine 5'-triphosphate to cyclic pyranopterin monophosphate (cPMP). In Mycobacterium bovis (strain ATCC BAA-935 / AF2122/97), this protein is Cyclic pyranopterin monophosphate synthase 3 (moaC3).